The chain runs to 131 residues: Small ribosomal subunit protein bS16 (131 aa).

The span at 87–117 shows a compositional bias: basic and acidic residues; sequence IGKSKQEELRKSEAKTSAKNKKANEEKANEE. The disordered stretch occupies residues 87-131; sequence IGKSKQEELRKSEAKTSAKNKKANEEKANEEKVEESETLEASSEA.

This sequence belongs to the bacterial ribosomal protein bS16 family.

This Prochlorococcus marinus (strain SARG / CCMP1375 / SS120) protein is Small ribosomal subunit protein bS16.